Reading from the N-terminus, the 1063-residue chain is Structural polyprotein (1063 aa).

The segment at 1–131 (MASTTPITME…LGPPTNPFQA (131 aa)) is disordered. Residues 30 to 69 (GASQSRRPRPPRQRDSSTSGDDSGRDSGGPRRRRGNRGRG) are human C1QBP/SF2P32-binding. Residue serine 46 is modified to Phosphoserine; by host. The span at 59 to 69 (PRRRRGNRGRG) shows a compositional bias: basic residues. Over residues 70–87 (QRRDWSRAPPPPEERQET) the composition is skewed to basic and acidic residues. A compositionally biased stretch (pro residues) spans 93-107 (APKPSRAPPQQPQPP). A disulfide bridge connects residues cysteine 153 and cysteine 197. The functions as E2 signal peptide stretch occupies residues 279-300 (GAPQAFLAGLLLATVAVGTARA). Residues 301–534 (GLQPRADMAA…LWLATANALS (234 aa)) lie on the Extracellular side of the membrane. Asparagine 353, asparagine 371, asparagine 410, and asparagine 429 each carry an N-linked (GlcNAc...) asparagine; by host glycan. A helical transmembrane segment spans residues 535–555 (LDHALAAFVLLVPWVLIFMVC). Residues 556–582 (RRACRRRGAAAALTAVVLQGYNPPAYG) are Cytoplasmic-facing. Positions 563 to 582 (GAAAALTAVVLQGYNPPAYG) are functions as E1 signal peptide. The Extracellular portion of the chain corresponds to 583–1028 (EEAFTYLCTA…QTWAEWAAAH (446 aa)). Intrachain disulfides connect cysteine 590–cysteine 595, cysteine 619–cysteine 824, cysteine 641–cysteine 653, cysteine 699–cysteine 712, cysteine 758–cysteine 767, cysteine 807–cysteine 817, cysteine 931–cysteine 934, and cysteine 950–cysteine 983. Asparagine 658 carries N-linked (GlcNAc...) asparagine; by host glycosylation. 2 residues coordinate Ca(2+): asparagine 670 and alanine 671. Residues aspartate 718 and threonine 719 each coordinate Ca(2+). Asparagine 759 and asparagine 791 each carry an N-linked (GlcNAc...) asparagine; by host glycan. Residues threonine 1011 and threonine 1012 are each glycosylated (O-linked (GalNAc...) threonine; by host). Residues 1029–1049 (WWQLTLGAICALPLAGLLACC) form a helical membrane-spanning segment. The Extracellular segment spans residues 1050–1063 (AKCLYYLRGAIAPR).

Homodimer; further assembles into homooligomer. Interacts with human C1QBP. Interacts (via N-terminus) with protease/methyltransferase p150. As to quaternary structure, heterodimer with spike glycoprotein E2. In terms of assembly, heterodimer with spike glycoprotein E1. Structural polyprotein: Specific enzymatic cleavages in vivo yield mature proteins. Two signal peptidase-mediated cleavages within the polyprotein produce the structural proteins capsid, E2, and E1. The E2 signal peptide remains attached to the C-terminus of the capsid protein after cleavage by the signal peptidase. Another signal peptide at E2 C-terminus directs E1 to the ER, with a similar mechanism. In terms of processing, contains three N-linked oligosaccharides. Post-translationally, capsid is phosphorylated on Ser-46 by host. This phosphorylation negatively regulates capsid protein RNA-binding activity. Dephosphorylated by human PP1A.

The protein localises to the virion. It is found in the host cytoplasm. The protein resides in the host mitochondrion. Its subcellular location is the virion membrane. It localises to the host Golgi apparatus membrane. Functionally, capsid protein interacts with genomic RNA and assembles into icosahedric core particles 65-70 nm in diameter. The resulting nucleocapsid eventually associates with the cytoplasmic domain of E2 at the cell membrane, leading to budding and formation of mature virions from host Golgi membranes. Phosphorylation negatively regulates RNA-binding activity, possibly delaying virion assembly during the viral replication phase. Capsid protein dimerizes and becomes disulfide-linked in the virion. Modulates genomic RNA replication. Modulates subgenomic RNA synthesis by interacting with human C1QBP/SF2P32. Induces both perinuclear clustering of mitochondria and the formation of electron-dense intermitochondrial plaques, both hallmarks of rubella virus infected cells. Induces apoptosis when expressed in transfected cells. Its function is as follows. Responsible for viral attachment to target host cell, by binding to the cell receptor. Its transport to the plasma membrane depends on interaction with E1 protein. The surface glycoproteins display an irregular helical organization and a pseudo-tetrameric inner nucleocapsid arrangement. In terms of biological role, class II viral fusion protein. Fusion activity is inactive as long as E1 is bound to E2 in mature virion. After virus attachment to target cell and clathrin-mediated endocytosis, acidification of the endosome would induce dissociation of E1/E2 heterodimer and concomitant trimerization of the E1 subunits. This E1 homotrimer is fusion active, and promotes release of viral nucleocapsid in cytoplasm after endosome and viral membrane fusion. The cytoplasmic tail of spike glycoprotein E1 modulates virus release. The surface glycoproteins display an irregular helical organization and a pseudo-tetrameric inner nucleocapsid arrangement. The chain is Structural polyprotein from Rubella virus (strain Therien) (RUBV).